The sequence spans 274 residues: MARKISDYHLKKREETQKKFIDLLAQNNYIHISGDMVNSKTKVKVRCRHNHTWQVNYEHFKKGTRCPECRIIEGSLKKRLNISTVKSRYALKGYEILSTYKNCHSKLKAKCPEGHIWEHLPSNFFKGEECFQCKGAKKYTVECAQAAFSDRGFIPLFDTYHHNKENLPFLCKEHIDLGVQYAPLHNMVRGLANCRKCYLLLFTGENSSRWKGGISSLNKTLREAVYEVWTKPSLEKYSFKCAITNSTKDLHVHHYKKNFSEIVKEALSNLSFEL.

This chain is SPbeta prophage-derived uncharacterized protein YomD (yomD), found in Bacillus subtilis (strain 168).